The primary structure comprises 178 residues: Transcription factor E (178 aa).

Residues 5-89 (AEELILSLAK…YWKVNIDQIN (85 aa)) enclose the HTH TFE/IIEalpha-type domain.

Belongs to the TFE family. Monomer. Interaction with RNA polymerase subunits RpoF and RpoE is necessary for Tfe stimulatory transcription activity. Able to interact with Tbp and RNA polymerase in the absence of DNA promoter. Interacts both with the preinitiation and elongation complexes.

Transcription factor that plays a role in the activation of archaeal genes transcribed by RNA polymerase. Facilitates transcription initiation by enhancing TATA-box recognition by TATA-box-binding protein (Tbp), and transcription factor B (Tfb) and RNA polymerase recruitment. Not absolutely required for transcription in vitro, but particularly important in cases where Tbp or Tfb function is not optimal. It dynamically alters the nucleic acid-binding properties of RNA polymerases by stabilizing the initiation complex and destabilizing elongation complexes. Seems to translocate with the RNA polymerase following initiation and acts by binding to the non template strand of the transcription bubble in elongation complexes. This is Transcription factor E from Sulfurisphaera tokodaii (strain DSM 16993 / JCM 10545 / NBRC 100140 / 7) (Sulfolobus tokodaii).